The following is a 741-amino-acid chain: 2-5A-dependent ribonuclease (741 aa).

Residues 1–21 (MESRDHNNPQEGPTSSSGRRA) form a disordered region. The span at 9-18 (PQEGPTSSSG) shows a compositional bias: polar residues. 9 ANK repeats span residues 24–53 (EDNH…NVNF), 58–87 (GGWT…DPVL), 91–120 (NGAT…DVNE), 124–153 (YGFT…NVNL), 167–197 (GGAT…DVNA), 201–234 (MGRN…DVNV), 238–268 (RGKT…EIND), 272–301 (DGKT…STDC), and 303–329 (DLVM…KEDF). 2-5A binding (P-loop) stretches follow at residues 229 to 242 (GADV…GKTP) and 253 to 275 (GLVQ…DGKT). The region spanning 365 to 586 (IDEKYKIADT…LSDLLGHPFF (222 aa)) is the Protein kinase domain. The C6-type; atypical zinc-finger motif lies at 395–444 (CEGSPRAQREVSCLQSSRENSHLVTFYGSESHRGHLFVCVTLCEQTLEAC). The region spanning 589–723 (WESRYRTLRN…KHFPQTHSPN (135 aa)) is the KEN domain. Lys-684 is modified (N6-acetyllysine). The disordered stretch occupies residues 715–741 (HFPQTHSPNKPQCDGAGGASGLASPGC).

Belongs to the protein kinase superfamily. As to quaternary structure, monomer (inactive form) or homodimer. Interacts with ABCE1; this interaction inhibits the RNASEL. Mn(2+) serves as cofactor. Requires Mg(2+) as cofactor. In terms of tissue distribution, highly expressed in spleen and thymus followed by prostate, testis, uterus, small intestine, colon and peripheral blood leukocytes.

It is found in the cytoplasm. Its subcellular location is the mitochondrion. With respect to regulation, after binding to 2-5A (5'-phosphorylated 2',5'-linked oligoadenylates) the homodimerization and subsequent activation occurs. Inhibited by RNASEL inhibitor ABCE1/RLI, a cytoplasmic member of the ATP-binding cassette (ABC) transporter family. Endoribonuclease that functions in the interferon (IFN) antiviral response. In INF treated and virus infected cells, RNASEL probably mediates its antiviral effects through a combination of direct cleavage of single-stranded viral RNAs, inhibition of protein synthesis through the degradation of rRNA, induction of apoptosis, and induction of other antiviral genes. RNASEL mediated apoptosis is the result of a JNK-dependent stress-response pathway leading to cytochrome c release from mitochondria and caspase-dependent apoptosis. Therefore, activation of RNASEL could lead to elimination of virus infected cells under some circumstances. In the crosstalk between autophagy and apoptosis proposed to induce autophagy as an early stress response to small double-stranded RNA and at later stages of prolonged stress to activate caspase-dependent proteolytic cleavage of BECN1 to terminate autophagy and promote apoptosis. Might play a central role in the regulation of mRNA turnover. Cleaves 3' of UpNp dimers, with preference for UU and UA sequences, to sets of discrete products ranging from between 4 and 22 nucleotides in length. This Homo sapiens (Human) protein is 2-5A-dependent ribonuclease (RNASEL).